Consider the following 695-residue polypeptide: UvrABC system protein C (695 aa).

The segment covering 1–10 (MNQDPAETRD) has biased composition (basic and acidic residues). The disordered stretch occupies residues 1-53 (MNQDPAETRDTAAPPPADTTSPSPVSPELEPRSAPGAQDIDAASASLTVDEDD). Over residues 18–27 (DTTSPSPVSP) the composition is skewed to low complexity. Residues 88-166 (TSPGVYRMLN…IKQLRPRFNV (79 aa)) enclose the GIY-YIG domain. The 36-residue stretch at 276–311 (RAVKQELAVEMEKASNELEFETAALYRDRLAALSAI) folds into the UVR domain.

Belongs to the UvrC family. Interacts with UvrB in an incision complex.

Its subcellular location is the cytoplasm. Its function is as follows. The UvrABC repair system catalyzes the recognition and processing of DNA lesions. UvrC both incises the 5' and 3' sides of the lesion. The N-terminal half is responsible for the 3' incision and the C-terminal half is responsible for the 5' incision. The sequence is that of UvrABC system protein C from Rhodopseudomonas palustris (strain BisB5).